The sequence spans 190 residues: A-type ATP synthase subunit E (190 aa).

Belongs to the V-ATPase E subunit family. Has multiple subunits with at least A(3), B(3), C, D, E, F, H, I and proteolipid K(x).

Its subcellular location is the cell membrane. Component of the A-type ATP synthase that produces ATP from ADP in the presence of a proton gradient across the membrane. The sequence is that of A-type ATP synthase subunit E from Pyrobaculum islandicum (strain DSM 4184 / JCM 9189 / GEO3).